Reading from the N-terminus, the 169-residue chain is Fumarase E (169 aa).

It belongs to the MtlR/FumE family.

The enzyme catalyses (S)-malate = fumarate + H2O. Functionally, in vitro catalyzes the addition of water to fumarate, forming malate. Cannot catalyze the reverse reaction. Cannot use the cis-isomer maleate as substrate. This Escherichia coli (strain K12) protein is Fumarase E.